We begin with the raw amino-acid sequence, 460 residues long: Mercuric reductase (460 aa).

One can recognise an HMA domain in the interval 1–65; it reads MTHLKITGMT…AVAGLGYKAM (65 aa). The a metal cation site is built by Cys11 and Cys14. FAD-binding residues include Ala110, Gly130, and Thr135. Cys136 and Cys141 are joined by a disulfide. Positions 145 and 211 each coordinate FAD. Cys457 and Cys458 together coordinate Hg(2+).

Belongs to the class-I pyridine nucleotide-disulfide oxidoreductase family. As to quaternary structure, homodimer. It depends on FAD as a cofactor.

The catalysed reaction is Hg + NADP(+) + H(+) = Hg(2+) + NADPH. Functionally, resistance to Hg(2+) in bacteria appears to be governed by a specialized system which includes mercuric reductase. MerA protein is responsible for volatilizing mercury as Hg(0). This Serratia marcescens protein is Mercuric reductase (merA).